Consider the following 582-residue polypeptide: Urocanate reductase (582 aa).

An N-terminal signal peptide occupies residues 1-20 (MHYKKSIIGIAVTATAIIAG). Residue C21 is the site of N-palmitoyl cysteine attachment. C21 carries S-diacylglycerol cysteine lipidation. Position 93 is an FMN phosphoryl threonine (T93). FAD is bound by residues A143, E162, N170, S171, G175, A176, A285, and D352. Catalysis depends on R411, which acts as the Proton donor. FAD contacts are provided by H521, E550, and A565.

The protein belongs to the FAD-dependent oxidoreductase 2 family. FRD/SDH subfamily. FAD serves as cofactor. FMN is required as a cofactor.

Its subcellular location is the cell membrane. The enzyme catalyses dihydrourocanate + A = urocanate + AH2. Catalyzes the two-electron reduction of urocanate to dihydrourocanate (also named imidazole propionate or deamino-histidine). The physiological electron donor is unknown; it might be the membrane-bound tetraheme cytochrome c (CymA). Enables anaerobic growth with urocanate as a sole terminal electron acceptor, and thus can provide the cells with a niche where no other bacteria can compete and survive. Is unable to reduce cinnamate and other unsaturated organic acids such as acrylic, crotonic, fumaric and orotic acids. Has no fumarate reductase or succinate dehydrogenase activity. The sequence is that of Urocanate reductase (urdA) from Shewanella oneidensis (strain ATCC 700550 / JCM 31522 / CIP 106686 / LMG 19005 / NCIMB 14063 / MR-1).